Consider the following 150-residue polypeptide: 16.9 kDa class I heat shock protein 1 (150 aa).

Residues 1–42 form an important for thermostability under elevated temperature region; it reads MSLVRRSNVFDPFSLDLWDPFDSVFRSVVPATSDNDTAAFAN. Positions 36-150 constitute a sHSP domain; that stretch reads DTAAFANARI…PEVKAIEISG (115 aa).

Belongs to the small heat shock protein (HSP20) family. In terms of assembly, forms oligomeric structures.

The protein resides in the cytoplasm. This chain is 16.9 kDa class I heat shock protein 1 (HSP16.9A), found in Oryza sativa subsp. japonica (Rice).